A 131-amino-acid polypeptide reads, in one-letter code: Large ribosomal subunit protein bL19 (131 aa).

It belongs to the bacterial ribosomal protein bL19 family.

In terms of biological role, this protein is located at the 30S-50S ribosomal subunit interface and may play a role in the structure and function of the aminoacyl-tRNA binding site. The protein is Large ribosomal subunit protein bL19 of Anaeromyxobacter sp. (strain K).